Consider the following 321-residue polypeptide: Calcium-binding protein LPS1-alpha (321 aa).

EF-hand domains lie at 15–49 (DAIE…NWTE), 47–82 (WTEE…STKE), 85–120 (YSSD…IYTK), 121–156 (VVDG…KLPI), 165–200 (EYRE…STKY), 200–233 (YSDK…DGVS), 232–267 (VSKD…IYRQ), and 269–304 (VDFE…NCPY). Ca(2+) is bound by residues Asp-29, Asn-31, Asp-33, Thr-35, Glu-40, Asp-60, Asn-62, Asp-64, His-66, Glu-71, Asp-98, Asp-100, Asn-102, Arg-104, Glu-109, Asp-134, Asp-136, Asp-138, His-140, Glu-145, Asp-178, Asn-180, Asp-182, Ser-184, Glu-189, Asp-213, Asn-215, Asp-217, Arg-219, Glu-224, Asp-245, Asp-247, Asn-249, Lys-251, Glu-256, Asp-284, Asp-286, Tyr-288, and Glu-293.

Aboral ectoderm, a squamous epithelium covering the surface of the late stage embryo and larva.

Functionally, calcium-binding protein involved in larval development and metamorphosis. Likely to function as calcium buffers mediating the transport of calcium from the sea water to the blastocoel where calcium is required for skeleton formation. The chain is Calcium-binding protein LPS1-alpha from Lytechinus pictus (Painted sea urchin).